The primary structure comprises 498 residues: ATP synthase subunit beta, chloroplastic (498 aa).

An ATP-binding site is contributed by glycine 172–threonine 179.

This sequence belongs to the ATPase alpha/beta chains family. F-type ATPases have 2 components, CF(1) - the catalytic core - and CF(0) - the membrane proton channel. CF(1) has five subunits: alpha(3), beta(3), gamma(1), delta(1), epsilon(1). CF(0) has four main subunits: a(1), b(1), b'(1) and c(9-12).

It is found in the plastid. It localises to the chloroplast thylakoid membrane. It carries out the reaction ATP + H2O + 4 H(+)(in) = ADP + phosphate + 5 H(+)(out). In terms of biological role, produces ATP from ADP in the presence of a proton gradient across the membrane. The catalytic sites are hosted primarily by the beta subunits. In Phaseolus vulgaris (Kidney bean), this protein is ATP synthase subunit beta, chloroplastic.